The following is a 144-amino-acid chain: Giant hemoglobin AIII chain (144 aa).

In terms of domain architecture, Globin spans 2 to 144; sequence ECGPLQRLKV…DVITGGIQGN (143 aa). H95 contributes to the heme b binding site.

Belongs to the globin family. In terms of assembly, giant hemoglobin is composed of four heme-containing chains (AI to AIV), and two linker chains (AV and AVI).

The polypeptide is Giant hemoglobin AIII chain (Lamellibrachia sp. (Deep-sea giant tube worm)).